Reading from the N-terminus, the 127-residue chain is UPF0102 protein NFA_41430 (127 aa).

The protein belongs to the UPF0102 family.

The chain is UPF0102 protein NFA_41430 from Nocardia farcinica (strain IFM 10152).